A 185-amino-acid chain; its full sequence is Elongation factor P (185 aa).

This sequence belongs to the elongation factor P family.

The protein localises to the cytoplasm. The protein operates within protein biosynthesis; polypeptide chain elongation. In terms of biological role, involved in peptide bond synthesis. Stimulates efficient translation and peptide-bond synthesis on native or reconstituted 70S ribosomes in vitro. Probably functions indirectly by altering the affinity of the ribosome for aminoacyl-tRNA, thus increasing their reactivity as acceptors for peptidyl transferase. This chain is Elongation factor P, found in Deinococcus geothermalis (strain DSM 11300 / CIP 105573 / AG-3a).